We begin with the raw amino-acid sequence, 496 residues long: Catalase isozyme 3 (496 aa).

The disordered stretch occupies residues 1–25; that stretch reads MTMDPTKFRPSSSHDTTVTTTNAGA. Residues 9–23 show a composition bias toward polar residues; it reads RPSSSHDTTVTTTNA. Active-site residues include H67 and N140. Y351 is a heme binding site. Residues 402–422 form a disordered region; that stretch reads PLRQAAPPTPLPPRPVAGRRE.

It belongs to the catalase family. Homotetramer. Heme is required as a cofactor. As to expression, leaf mesophyll cells, pericarp, seedling roots and the coleoptile.

It is found in the mitochondrion. It catalyses the reaction 2 H2O2 = O2 + 2 H2O. In terms of biological role, occurs in almost all aerobically respiring organisms and serves to protect cells from the toxic effects of hydrogen peroxide. Its levels are highest in the light period and are lowest in the dark period, hence it may be important for scavenging hydrogen peroxide at night, rather than during the day. The sequence is that of Catalase isozyme 3 (CAT3) from Zea mays (Maize).